We begin with the raw amino-acid sequence, 504 residues long: ATP synthase subunit alpha, chloroplastic (504 aa).

An ATP-binding site is contributed by 170 to 177 (GDRQTGKT).

It belongs to the ATPase alpha/beta chains family. As to quaternary structure, F-type ATPases have 2 components, CF(1) - the catalytic core - and CF(0) - the membrane proton channel. CF(1) has five subunits: alpha(3), beta(3), gamma(1), delta(1), epsilon(1). CF(0) has four main subunits: a, b, b' and c.

The protein resides in the plastid. Its subcellular location is the chloroplast thylakoid membrane. The catalysed reaction is ATP + H2O + 4 H(+)(in) = ADP + phosphate + 5 H(+)(out). Its function is as follows. Produces ATP from ADP in the presence of a proton gradient across the membrane. The alpha chain is a regulatory subunit. The polypeptide is ATP synthase subunit alpha, chloroplastic (Cyanidium caldarium (Red alga)).